We begin with the raw amino-acid sequence, 1188 residues long: DNA-directed RNA polymerase II subunit 2 (1188 aa).

Asp800 is a binding site for Mg(2+). 2 disordered regions span residues 852–871 (SYDKLDDDGLAPPGTRVSGE) and 877–897 (KTTPISQDEAQGQSSRYTRRD). The segment covering 879–892 (TPISQDEAQGQSSR) has biased composition (polar residues). Residues Cys1124, Cys1127, Cys1142, and Cys1145 each contribute to the Zn(2+) site. The C4-type zinc-finger motif lies at 1124–1145 (CEVCGLIAIANLKKNSFECRGC).

The protein belongs to the RNA polymerase beta chain family. Component of the RNA polymerase II complex consisting of at least 12 subunits.

The protein localises to the nucleus. It catalyses the reaction RNA(n) + a ribonucleoside 5'-triphosphate = RNA(n+1) + diphosphate. In terms of biological role, DNA-dependent RNA polymerase catalyzes the transcription of DNA into RNA using the four ribonucleoside triphosphates as substrates. Second largest component of RNA polymerase II which synthesizes mRNA precursors and many functional non-coding RNAs. Proposed to contribute to the polymerase catalytic activity and forms the polymerase active center together with the largest subunit. Pol II is the central component of the basal RNA polymerase II transcription machinery. It is composed of mobile elements that move relative to each other. NRPB2 is part of the core element with the central large cleft, the clamp element that moves to open and close the cleft and the jaws that are thought to grab the incoming DNA template. Its function is as follows. Essential for the completion of the three rounds of mitosis in female megaspores required for the development of mature gametophytes. This Arabidopsis thaliana (Mouse-ear cress) protein is DNA-directed RNA polymerase II subunit 2 (NRPB2).